Here is a 78-residue protein sequence, read N- to C-terminus: MAFRENVLEILEEITETEEVVQNTNIKLFDEGLLDSMATVQLLIEIEEKLDITVPVSEFDRDEWATPEMIITQLEALK.

The Carrier domain occupies 1–78; the sequence is MAFRENVLEI…MIITQLEALK (78 aa). At Ser-36 the chain carries O-(pantetheine 4'-phosphoryl)serine.

It belongs to the DltC family. Post-translationally, 4'-phosphopantetheine is transferred from CoA to a specific serine of apo-DCP.

The protein resides in the cytoplasm. It participates in cell wall biogenesis; lipoteichoic acid biosynthesis. Carrier protein involved in the D-alanylation of lipoteichoic acid (LTA). The loading of thioester-linked D-alanine onto DltC is catalyzed by D-alanine--D-alanyl carrier protein ligase DltA. The DltC-carried D-alanyl group is further transferred to cell membrane phosphatidylglycerol (PG) by forming an ester bond, probably catalyzed by DltD. D-alanylation of LTA plays an important role in modulating the properties of the cell wall in Gram-positive bacteria, influencing the net charge of the cell wall. The sequence is that of D-alanyl carrier protein from Listeria welshimeri serovar 6b (strain ATCC 35897 / DSM 20650 / CCUG 15529 / CIP 8149 / NCTC 11857 / SLCC 5334 / V8).